The primary structure comprises 120 residues: Thiosulfate sulfurtransferase 16, chloroplastic (120 aa).

The 101-residue stretch at 20 to 120 folds into the Rhodanese domain; it reads LLAGHRYLDV…WAKNGLPTKA (101 aa). Cys-80 acts as the Cysteine persulfide intermediate in catalysis. Position 85 (Arg-85) interacts with substrate.

As to quaternary structure, monomer.

It is found in the plastid. It localises to the chloroplast. The catalysed reaction is thiosulfate + hydrogen cyanide = thiocyanate + sulfite + 2 H(+). Functionally, thought to act during the early stages of leaf senescence. Catalyzes the transfer of a sulfur ion from a donor to cyanide or to other thiol compounds. Substrate preference is thiosulfate &gt; 3-mercaptopyruvate. The protein is Thiosulfate sulfurtransferase 16, chloroplastic (STR16) of Arabidopsis thaliana (Mouse-ear cress).